Reading from the N-terminus, the 367-residue chain is MTSLGTPIQGVTLYSFTRAFHARQYDLDGLIRKVAAEGFGPGLELIGFSSLRGFPDGIDDAFVGQFRDLVAEVDLIPTSLAVNVDTGIRRDRLMNHDELVEYMSKQIEVAARLGFPIARVQISLTPDAMESLLPVAEKYGVTLALEVHADQHGAHERVLALRDRYEKLDSPLLGFTADWGATVTGFAPSLLEAYRRRGAAEDLLRQVVELWNGFYAEGPPNTQKVHGERFGAFIGLAARSGRPDLGIDFAINGTGLFGPAPLDTWLEIMPWVRHVHGKFFGIDENGEEPSVPVRDLVRQLVENGYSGAISSEYEGWHWNNWQDPFDIIRGEQAVQRSAAANAGSAMITDASEARRILNSHLAQPVRG.

Glu146 lines the Mg(2+) pocket. His148 acts as the Proton acceptor in catalysis. Residues Asp178, His276, and Glu312 each contribute to the Mg(2+) site.

It belongs to the C-glycoside deglycosidase alpha subunit family. In terms of assembly, heterodimer composed of an alpha subunit (CarB1) and a beta subunit (CarC1). Mg(2+) serves as cofactor.

The catalysed reaction is 3''-dehydroisovitexin = 1,5-anhydro-D-erythro-hex-1-en-3-ulose + apigenin. Its activity is regulated as follows. Activity is strongly reduced in the presence of chelating agents. Its function is as follows. Carbon-carbon bond-cleaving enzyme which participates in the metabolism of C-glycosides. Acts on the C6-glycosylated compound 3''-dehydroisovitexin (3''-oxo-isovitexin). Shows weak activity with 3''-dehydroisoorientin (3''-oxo-homoorientin) and 3'-dehydromangiferin (3'-oxo-mangiferin). This is C-glycoside deglycosidase alpha subunit from Arthrobacter globiformis (strain ATCC 8010 / DSM 20124 / JCM 1332 / NBRC 12137 / NCIMB 8907 / NRRL B-2979 / 168).